A 526-amino-acid chain; its full sequence is Peptide chain release factor 3 (526 aa).

Positions 8 to 277 constitute a tr-type G domain; it reads NKRRTFAIIS…GLTEWAPKPQ (270 aa). GTP is bound by residues 17–24, 85–89, and 139–142; these read SHPDAGKT, DTPGH, and NKLD.

Belongs to the TRAFAC class translation factor GTPase superfamily. Classic translation factor GTPase family. PrfC subfamily.

Its subcellular location is the cytoplasm. Increases the formation of ribosomal termination complexes and stimulates activities of RF-1 and RF-2. It binds guanine nucleotides and has strong preference for UGA stop codons. It may interact directly with the ribosome. The stimulation of RF-1 and RF-2 is significantly reduced by GTP and GDP, but not by GMP. This is Peptide chain release factor 3 from Actinobacillus pleuropneumoniae serotype 5b (strain L20).